Reading from the N-terminus, the 787-residue chain is Protocadherin beta-15 (787 aa).

Positions 1–26 are cleaved as a signal peptide; sequence MEPAGERFPEQRQVLILLLLLEVTLA. At 27–690 the chain is on the extracellular side; that stretch reads GWEPRRYSVM…AQADSLTVYL (664 aa). Cadherin domains follow at residues 35 to 133, 138 to 242, 247 to 347, 352 to 451, and 456 to 561; these read VMEE…SPEF, MTLK…APEF, YEVQ…FPEL, LTSP…APAF, and YTLF…SPFV. An N-linked (GlcNAc...) asparagine glycan is attached at Asn-418. An N-linked (GlcNAc...) asparagine glycan is attached at Asn-567. One can recognise a Cadherin 6 domain in the interval 568-671; that stretch reads GSAPCTELVP…LVDGFSQPYL (104 aa). Residues 691–711 traverse the membrane as a helical segment; sequence VVALASVSSLFLFSVFLFVAV. At 712–787 the chain is on the cytoplasmic side; sequence RLCRRSRAAS…DSRRKSEFLE (76 aa).

The protein resides in the cell membrane. Functionally, potential calcium-dependent cell-adhesion protein. May be involved in the establishment and maintenance of specific neuronal connections in the brain. This Homo sapiens (Human) protein is Protocadherin beta-15 (PCDHB15).